Consider the following 66-residue polypeptide: Large ribosomal subunit protein bL35 (66 aa).

2 stretches are compositionally biased toward basic residues: residues 1-15 (MPKLKTKSGAKKRFK) and 24-40 (HAQRGKRHGMIKRTKKQ). Residues 1–40 (MPKLKTKSGAKKRFKVTGTGKVMHAQRGKRHGMIKRTKKQ) form a disordered region.

It belongs to the bacterial ribosomal protein bL35 family.

This Bradyrhizobium sp. (strain ORS 278) protein is Large ribosomal subunit protein bL35.